The sequence spans 968 residues: Translation initiation factor IF-2 (968 aa).

Over residues 305 to 319 (KPAAAAGAPGAPGAA) the composition is skewed to low complexity. The tract at residues 305–376 (KPAAAAGAPG…NDRDARPEST (72 aa)) is disordered. Positions 468–635 (PRAPVVTVMG…QVLLQAEVLE (168 aa)) constitute a tr-type G domain. The G1 stretch occupies residues 477–484 (GHVDHGKT). 477–484 (GHVDHGKT) provides a ligand contact to GTP. A G2 region spans residues 502–506 (GITQH). The segment at 523-526 (DTPG) is G3. GTP is bound by residues 523–527 (DTPGH) and 577–580 (NKID). The segment at 577 to 580 (NKID) is G4. Residues 613 to 615 (SAR) form a G5 region.

This sequence belongs to the TRAFAC class translation factor GTPase superfamily. Classic translation factor GTPase family. IF-2 subfamily.

The protein localises to the cytoplasm. Its function is as follows. One of the essential components for the initiation of protein synthesis. Protects formylmethionyl-tRNA from spontaneous hydrolysis and promotes its binding to the 30S ribosomal subunits. Also involved in the hydrolysis of GTP during the formation of the 70S ribosomal complex. This Polaromonas sp. (strain JS666 / ATCC BAA-500) protein is Translation initiation factor IF-2.